The following is a 231-amino-acid chain: Large ribosomal subunit protein uL1 (231 aa).

The protein belongs to the universal ribosomal protein uL1 family. In terms of assembly, part of the 50S ribosomal subunit.

Binds directly to 23S rRNA. The L1 stalk is quite mobile in the ribosome, and is involved in E site tRNA release. Its function is as follows. Protein L1 is also a translational repressor protein, it controls the translation of the L11 operon by binding to its mRNA. The sequence is that of Large ribosomal subunit protein uL1 from Legionella pneumophila (strain Paris).